The following is a 159-amino-acid chain: Transcription elongation factor GreA (159 aa).

Belongs to the GreA/GreB family.

In terms of biological role, necessary for efficient RNA polymerase transcription elongation past template-encoded arresting sites. The arresting sites in DNA have the property of trapping a certain fraction of elongating RNA polymerases that pass through, resulting in locked ternary complexes. Cleavage of the nascent transcript by cleavage factors such as GreA or GreB allows the resumption of elongation from the new 3'terminus. GreA releases sequences of 2 to 3 nucleotides. The protein is Transcription elongation factor GreA of Orientia tsutsugamushi (strain Boryong) (Rickettsia tsutsugamushi).